We begin with the raw amino-acid sequence, 117 residues long: Large ribosomal subunit protein uL18 (117 aa).

It belongs to the universal ribosomal protein uL18 family. In terms of assembly, part of the 50S ribosomal subunit; part of the 5S rRNA/L5/L18/L25 subcomplex. Contacts the 5S and 23S rRNAs.

This is one of the proteins that bind and probably mediate the attachment of the 5S RNA into the large ribosomal subunit, where it forms part of the central protuberance. The sequence is that of Large ribosomal subunit protein uL18 from Serratia proteamaculans (strain 568).